We begin with the raw amino-acid sequence, 238 residues long: NAD(P)H-hydrate epimerase (238 aa).

The YjeF N-terminal domain occupies 10 to 225 (AIKVDQILFN…ALQRQYELNL (216 aa)). (6S)-NADPHX is bound at residue 68–72 (NNGGD). K(+) contacts are provided by Asn69 and Asp133. Residues 137-143 (GFSFKPP) and Asp166 contribute to the (6S)-NADPHX site. Ser169 is a binding site for K(+).

It belongs to the NnrE/AIBP family. K(+) is required as a cofactor.

It catalyses the reaction (6R)-NADHX = (6S)-NADHX. The catalysed reaction is (6R)-NADPHX = (6S)-NADPHX. Functionally, catalyzes the epimerization of the S- and R-forms of NAD(P)HX, a damaged form of NAD(P)H that is a result of enzymatic or heat-dependent hydration. This is a prerequisite for the S-specific NAD(P)H-hydrate dehydratase to allow the repair of both epimers of NAD(P)HX. The protein is NAD(P)H-hydrate epimerase of Drosophila willistoni (Fruit fly).